The chain runs to 389 residues: E3 ubiquitin-protein ligase E3D (389 aa).

N-acetylalanine is present on alanine 2. Residues proline 129–asparagine 159 carry the BRAT1-like motif motif. Cysteine 144 contributes to the Zn(2+) binding site. The tract at residues leucine 235–cysteine 257 is interaction with UBE2C. The interval leucine 353–methionine 389 is HECT-like.

Interacts with UBE2C/UbcH10 (E2 ubiquitin-conjugating enzyme). In vitro, interacts with cyclin-B. In terms of processing, ubiquitinated by UBCH10 (E2 ubiquitin-conjugating enzyme).

The protein resides in the cytoplasm. It carries out the reaction S-ubiquitinyl-[E2 ubiquitin-conjugating enzyme]-L-cysteine + [acceptor protein]-L-lysine = [E2 ubiquitin-conjugating enzyme]-L-cysteine + N(6)-ubiquitinyl-[acceptor protein]-L-lysine.. The protein operates within protein modification; protein ubiquitination. In terms of biological role, E3 ubiquitin-protein ligase which accepts ubiquitin from specific E2 ubiquitin-conjugating enzymes, and transfers it to substrates, generally promoting their degradation by the proteasome. Independently of its E3 ubiquitin-protein ligase activity, acts as an inhibitor of CPSF3 endonuclease activity by blocking CPSF3 active site. The chain is E3 ubiquitin-protein ligase E3D (UBE3D) from Bos taurus (Bovine).